The chain runs to 102 residues: Gonadotropin subunit beta-1 (102 aa).

5 disulfides stabilise this stretch: C8/C51, C20/C65, C31/C77, C35/C79, and C82/C89. N12 carries an N-linked (GlcNAc...) asparagine glycan.

The protein belongs to the glycoprotein hormones subunit beta family. Heterodimer of an alpha and a beta chain.

It is found in the secreted. Its function is as follows. Involved in gametogenesis and steroidogenesis. In Thunnus obesus (Bigeye tuna), this protein is Gonadotropin subunit beta-1 (cgba).